A 400-amino-acid chain; its full sequence is Nicotinate phosphoribosyltransferase (400 aa).

His220 carries the post-translational modification Phosphohistidine; by autocatalysis.

This sequence belongs to the NAPRTase family. Transiently phosphorylated on a His residue during the reaction cycle. Phosphorylation strongly increases the affinity for substrates and increases the rate of nicotinate D-ribonucleotide production. Dephosphorylation regenerates the low-affinity form of the enzyme, leading to product release.

The enzyme catalyses nicotinate + 5-phospho-alpha-D-ribose 1-diphosphate + ATP + H2O = nicotinate beta-D-ribonucleotide + ADP + phosphate + diphosphate. It participates in cofactor biosynthesis; NAD(+) biosynthesis; nicotinate D-ribonucleotide from nicotinate: step 1/1. Functionally, catalyzes the synthesis of beta-nicotinate D-ribonucleotide from nicotinate and 5-phospho-D-ribose 1-phosphate at the expense of ATP. In Escherichia fergusonii (strain ATCC 35469 / DSM 13698 / CCUG 18766 / IAM 14443 / JCM 21226 / LMG 7866 / NBRC 102419 / NCTC 12128 / CDC 0568-73), this protein is Nicotinate phosphoribosyltransferase.